We begin with the raw amino-acid sequence, 285 residues long: 4-diphosphocytidyl-2-C-methyl-D-erythritol kinase (285 aa).

The active site involves Lys-12. An ATP-binding site is contributed by 95 to 105 (PMGGGVGGGSS). The active site involves Asp-137.

It belongs to the GHMP kinase family. IspE subfamily.

The catalysed reaction is 4-CDP-2-C-methyl-D-erythritol + ATP = 4-CDP-2-C-methyl-D-erythritol 2-phosphate + ADP + H(+). It participates in isoprenoid biosynthesis; isopentenyl diphosphate biosynthesis via DXP pathway; isopentenyl diphosphate from 1-deoxy-D-xylulose 5-phosphate: step 3/6. Its function is as follows. Catalyzes the phosphorylation of the position 2 hydroxy group of 4-diphosphocytidyl-2C-methyl-D-erythritol. The chain is 4-diphosphocytidyl-2-C-methyl-D-erythritol kinase from Actinobacillus pleuropneumoniae serotype 5b (strain L20).